We begin with the raw amino-acid sequence, 795 residues long: Probable alpha,alpha-trehalose-phosphate synthase [UDP-forming] 4 (795 aa).

Residues 4–469 form a glycosyltransferase region; that stretch reads PRLLVVSMSL…WADDFMKLTL (466 aa).

In the N-terminal section; belongs to the glycosyltransferase 20 family. This sequence in the C-terminal section; belongs to the trehalose phosphatase family.

It catalyses the reaction D-glucose 6-phosphate + UDP-alpha-D-glucose = alpha,alpha-trehalose 6-phosphate + UDP + H(+). The protein is Probable alpha,alpha-trehalose-phosphate synthase [UDP-forming] 4 (TPS4) of Arabidopsis thaliana (Mouse-ear cress).